Consider the following 21-residue polypeptide: Tricyclic peptide MS-271 (21 aa).

A cross-link (3-cysteinyl-aspartic acid (Cys-Asp)) is located at residues 1 to 9 (CLGVGSCND). 2 cysteine pairs are disulfide-bonded: Cys-1–Cys-13 and Cys-7–Cys-19. A D-tryptophan modification is found at Trp-21.

Its function is as follows. Inhibits chicken myosin light chain kinase with an IC(50) of 8 M. Does not inhibit bovine cAMP-dependent protein kinase or rat protein kinase C. Antibacterial activity against the Gram-positive bacteria B.subtilis, E.faecium and S.aureus. No antibacterial activity against the Gram-negative bacteria E.coli, K.pneumoniae, P.aeruginosa, P.vulgaris, S.sonnei and S.typhosa. No antifungal activity against C.albicans. In Streptomyces sp, this protein is Tricyclic peptide MS-271.